We begin with the raw amino-acid sequence, 513 residues long: Bifunctional purine biosynthesis protein PurH (513 aa).

Residues methionine 1–valine 145 form the MGS-like domain.

This sequence belongs to the PurH family.

It carries out the reaction (6R)-10-formyltetrahydrofolate + 5-amino-1-(5-phospho-beta-D-ribosyl)imidazole-4-carboxamide = 5-formamido-1-(5-phospho-D-ribosyl)imidazole-4-carboxamide + (6S)-5,6,7,8-tetrahydrofolate. It catalyses the reaction IMP + H2O = 5-formamido-1-(5-phospho-D-ribosyl)imidazole-4-carboxamide. It participates in purine metabolism; IMP biosynthesis via de novo pathway; 5-formamido-1-(5-phospho-D-ribosyl)imidazole-4-carboxamide from 5-amino-1-(5-phospho-D-ribosyl)imidazole-4-carboxamide (10-formyl THF route): step 1/1. It functions in the pathway purine metabolism; IMP biosynthesis via de novo pathway; IMP from 5-formamido-1-(5-phospho-D-ribosyl)imidazole-4-carboxamide: step 1/1. In Caldicellulosiruptor bescii (strain ATCC BAA-1888 / DSM 6725 / KCTC 15123 / Z-1320) (Anaerocellum thermophilum), this protein is Bifunctional purine biosynthesis protein PurH.